The following is a 143-amino-acid chain: Ribulose bisphosphate carboxylase large chain (143 aa).

A propeptide spanning residues 1-2 (MS) is cleaved from the precursor. Residue proline 3 is modified to N-acetylproline. An N6,N6,N6-trimethyllysine modification is found at lysine 14. Residue residue 123 participates in substrate binding.

The protein belongs to the RuBisCO large chain family. Type I subfamily. As to quaternary structure, heterohexadecamer of 8 large chains and 8 small chains.

Its subcellular location is the plastid. The protein resides in the chloroplast. It carries out the reaction 2 (2R)-3-phosphoglycerate + 2 H(+) = D-ribulose 1,5-bisphosphate + CO2 + H2O. It catalyses the reaction D-ribulose 1,5-bisphosphate + O2 = 2-phosphoglycolate + (2R)-3-phosphoglycerate + 2 H(+). In terms of biological role, ruBisCO catalyzes two reactions: the carboxylation of D-ribulose 1,5-bisphosphate, the primary event in carbon dioxide fixation, as well as the oxidative fragmentation of the pentose substrate in the photorespiration process. Both reactions occur simultaneously and in competition at the same active site. This Nemopanthus mucronatus (Catberry) protein is Ribulose bisphosphate carboxylase large chain (rbcL).